We begin with the raw amino-acid sequence, 542 residues long: Pre-mRNA-splicing factor 38B (542 aa).

Residues methionine 1–serine 12 are compositionally biased toward polar residues. The interval methionine 1 to serine 41 is disordered. Position 2 is an N-acetylalanine (alanine 2). Serine 5 bears the Phosphoserine mark. Residues glutamine 13–glutamine 28 are compositionally biased toward low complexity. Lysine 228 carries the post-translational modification N6-acetyllysine. Residues glutamine 233–valine 542 form a disordered region. The segment covering aspartate 244–valine 256 has biased composition (basic and acidic residues). Positions glutamate 257–glutamate 285 are enriched in basic residues. Serine 289, serine 291, serine 319, and serine 321 each carry phosphoserine. Residues phenylalanine 292–arginine 328 show a composition bias toward basic and acidic residues. A coiled-coil region spans residues aspartate 293–isoleucine 322. Residues arginine 329–aspartate 345 show a composition bias toward basic residues. The segment covering arginine 346–glutamate 419 has biased composition (basic and acidic residues). A compositionally biased stretch (basic residues) spans serine 420–serine 447. At serine 445 the chain carries Phosphoserine. Over residues arginine 448–asparagine 465 the composition is skewed to basic and acidic residues. Phosphoserine is present on residues serine 470, serine 472, and serine 478. Composition is skewed to basic and acidic residues over residues serine 478–glutamate 491 and arginine 498–histidine 520. 3 positions are modified to phosphoserine: serine 523, serine 525, and serine 530. Residues serine 530–valine 542 are compositionally biased toward basic and acidic residues.

This sequence belongs to the PRP38 family.

It localises to the nucleus. Functionally, may be required for pre-mRNA splicing. The chain is Pre-mRNA-splicing factor 38B (Prpf38b) from Mus musculus (Mouse).